The sequence spans 298 residues: Tyrosine recombinase XerC (298 aa).

Positions 1–84 constitute a Core-binding (CB) domain; the sequence is MNHIQDAFLN…TLRTFYEYWM (84 aa). The 182-residue stretch at 105–286 folds into the Tyr recombinase domain; it reads YLPQFFYEEE…SNQQLRKVYL (182 aa). Catalysis depends on residues Arg145, Lys169, His238, Arg241, and His264. Catalysis depends on Tyr273, which acts as the O-(3'-phospho-DNA)-tyrosine intermediate.

This sequence belongs to the 'phage' integrase family. XerC subfamily. As to quaternary structure, forms a cyclic heterotetrameric complex composed of two molecules of XerC and two molecules of XerD.

The protein resides in the cytoplasm. Site-specific tyrosine recombinase, which acts by catalyzing the cutting and rejoining of the recombining DNA molecules. The XerC-XerD complex is essential to convert dimers of the bacterial chromosome into monomers to permit their segregation at cell division. It also contributes to the segregational stability of plasmids. The sequence is that of Tyrosine recombinase XerC from Staphylococcus aureus (strain USA300).